The chain runs to 865 residues: Lactose regulatory protein LAC9 (865 aa).

Positions 1-15 (MGSRASNSPSFSSKA) are enriched in polar residues. The tract at residues 1–87 (MGSRASNSPS…NNNNNNNKKS (87 aa)) is disordered. A compositionally biased stretch (basic and acidic residues) spans 22 to 34 (EYKKNAVKKETIR). The segment covering 67 to 85 (SNGNKNDSNANNNNNNNNK) has biased composition (low complexity). C95, C98, C105, C112, C115, and C122 together coordinate Zn(2+). Residues 95-122 (CDACRKKKWKCSKTVPTCTNCLKYNLDC) constitute a DNA-binding region (zn(2)-C6 fungal-type). The interval 818–840 (LQSSTTQMRPPTTSGWPDTNNFL) is disordered.

The protein localises to the nucleus. Functionally, positive regulatory protein, that controls induction of the lactose-galactose regulation of Kluyveromyces lactis. The sequence is that of Lactose regulatory protein LAC9 (LAC9) from Kluyveromyces lactis (strain ATCC 8585 / CBS 2359 / DSM 70799 / NBRC 1267 / NRRL Y-1140 / WM37) (Yeast).